We begin with the raw amino-acid sequence, 207 residues long: Proteasome subunit beta 2 (207 aa).

A propeptide spans 1-10 (MLQLTEKFKG) (removed in mature form; by autocatalysis). The active-site Nucleophile is threonine 11.

It belongs to the peptidase T1B family. The 20S proteasome core is composed of 14 alpha and 14 beta subunits that assemble into four stacked heptameric rings, resulting in a barrel-shaped structure. The two inner rings, each composed of seven catalytic beta subunits, are sandwiched by two outer rings, each composed of seven alpha subunits. The catalytic chamber with the active sites is on the inside of the barrel. Has a gated structure, the ends of the cylinder being occluded by the N-termini of the alpha-subunits. Is capped at one or both ends by the proteasome regulatory ATPase, PAN.

Its subcellular location is the cytoplasm. It catalyses the reaction Cleavage of peptide bonds with very broad specificity.. The formation of the proteasomal ATPase PAN-20S proteasome complex, via the docking of the C-termini of PAN into the intersubunit pockets in the alpha-rings, triggers opening of the gate for substrate entry. Interconversion between the open-gate and close-gate conformations leads to a dynamic regulation of the 20S proteasome proteolysis activity. In terms of biological role, component of the proteasome core, a large protease complex with broad specificity involved in protein degradation. The chain is Proteasome subunit beta 2 from Pyrococcus abyssi (strain GE5 / Orsay).